A 358-amino-acid polypeptide reads, in one-letter code: DNA replication and repair protein RecF (358 aa).

An ATP-binding site is contributed by 30–37 (GANGSGKT).

It belongs to the RecF family.

Its subcellular location is the cytoplasm. Functionally, the RecF protein is involved in DNA metabolism; it is required for DNA replication and normal SOS inducibility. RecF binds preferentially to single-stranded, linear DNA. It also seems to bind ATP. In Edwardsiella ictaluri (strain 93-146), this protein is DNA replication and repair protein RecF.